The chain runs to 258 residues: Acyl-[acyl-carrier-protein]--UDP-N-acetylglucosamine O-acyltransferase (258 aa).

Belongs to the transferase hexapeptide repeat family. LpxA subfamily. In terms of assembly, homotrimer.

The protein localises to the cytoplasm. The catalysed reaction is a (3R)-hydroxyacyl-[ACP] + UDP-N-acetyl-alpha-D-glucosamine = a UDP-3-O-[(3R)-3-hydroxyacyl]-N-acetyl-alpha-D-glucosamine + holo-[ACP]. Its pathway is glycolipid biosynthesis; lipid IV(A) biosynthesis; lipid IV(A) from (3R)-3-hydroxytetradecanoyl-[acyl-carrier-protein] and UDP-N-acetyl-alpha-D-glucosamine: step 1/6. Functionally, involved in the biosynthesis of lipid A, a phosphorylated glycolipid that anchors the lipopolysaccharide to the outer membrane of the cell. The chain is Acyl-[acyl-carrier-protein]--UDP-N-acetylglucosamine O-acyltransferase from Pseudomonas syringae pv. syringae (strain B728a).